We begin with the raw amino-acid sequence, 27 residues long: Cupiennin-3d (27 aa).

At Glu27 the chain carries Glutamic acid 1-amide.

As to expression, expressed by the venom gland.

It localises to the secreted. This is Cupiennin-3d from Cupiennius salei (American wandering spider).